A 510-amino-acid chain; its full sequence is Maturase K (510 aa).

Belongs to the intron maturase 2 family. MatK subfamily.

It is found in the plastid. Its subcellular location is the chloroplast. In terms of biological role, usually encoded in the trnK tRNA gene intron. Probably assists in splicing its own and other chloroplast group II introns. The polypeptide is Maturase K (Taxus cuspidata (Japanese yew)).